A 452-amino-acid polypeptide reads, in one-letter code: Exodeoxyribonuclease 7 large subunit (452 aa).

It belongs to the XseA family. As to quaternary structure, heterooligomer composed of large and small subunits.

The protein resides in the cytoplasm. It carries out the reaction Exonucleolytic cleavage in either 5'- to 3'- or 3'- to 5'-direction to yield nucleoside 5'-phosphates.. Its function is as follows. Bidirectionally degrades single-stranded DNA into large acid-insoluble oligonucleotides, which are then degraded further into small acid-soluble oligonucleotides. This chain is Exodeoxyribonuclease 7 large subunit, found in Bordetella avium (strain 197N).